Reading from the N-terminus, the 107-residue chain is Guanylate cyclase activator 2B (107 aa).

Residues 1-21 (MSGSQLWAAVVVLLLLQSAQG) form the signal peptide. A propeptide spanning residues 22 to 92 (VYIKYHGFQV…STFKALRTIA (71 aa)) is cleaved from the precursor. 3 disulfide bridges follow: cysteine 63–cysteine 76, cysteine 96–cysteine 104, and cysteine 99–cysteine 107.

The protein belongs to the guanylin family.

The protein localises to the secreted. Functionally, endogenous activator of intestinal guanylate cyclase. It stimulates this enzyme through the same receptor binding region as the heat-stable enterotoxins. May be a potent physiological regulator of intestinal fluid and electrolyte transport. May be an autocrine/paracrine regulator of intestinal salt and water transport. The sequence is that of Guanylate cyclase activator 2B (GUCA2B) from Notomys alexis (Spinifex hopping mouse).